Reading from the N-terminus, the 692-residue chain is Transforming growth factor beta activator LRRC33 (692 aa).

A signal peptide spans 1–18 (MELLPLWLCLGFHFLTVG). At 19–650 (WRNRSGTATA…CKWERLDLGL (632 aa)) the chain is on the extracellular side. Asparagine 21 carries an N-linked (GlcNAc...) asparagine glycan. In terms of domain architecture, LRRNT spans 29 to 56 (ASQGVCKLVGGAADCRGQSLASVPSSLP). LRR repeat units follow at residues 58-79 (HARMLTLDANPLKTLWNHSLQP), 82-103 (LLESLSLHSCHLERISRGAFQE), 106-127 (HLRSLVLGDNCLSENYEETAAA), 133-155 (GLRRLDLSGNALTEDMAALMLQN), 158-179 (SLRSVSLAGNTIMRLDDSVFEG), 182-203 (RLRELDLQRNYIFEIEGGAFDG), 206-227 (ELRHLNLAFNNLPCIVDFGLTR), 228-239 (LRVLNVSYNVLE), 251-272 (ELETLDLSHNQLLFFPLLPQYS), and 273-294 (KLRTLLLRDNNMGFYRDLYNTS). An N-linked (GlcNAc...) asparagine glycan is attached at asparagine 74. Residue asparagine 155 is glycosylated (N-linked (GlcNAc...) asparagine). N-linked (GlcNAc...) asparagine glycosylation is present at asparagine 232. 3 N-linked (GlcNAc...) asparagine glycosylation sites follow: asparagine 292, asparagine 309, and asparagine 312. LRR repeat units follow at residues 329-350 (DLRFLDMSQNQFQYLPDGFLRK), 353-374 (SLSHLNLHQNCLMTLHIREHEP), 377-398 (ALTELDLSHNQLSELHLAPGLA), 403-424 (SLRLFNLSSNQLLGVPPGLFAN), 427-447 (NITTLDMSHNQISLCPLPAAS), 463-484 (SLRSLSLEGCGLGALPDCPFQG), 486-507 (SLTYLDLSSNWGVLNGSLAPLQ), 512-534 (MLQVLSLRNMGLHSSFMALDFSG), 537-558 (NLRDLDLSGNCLTTFPRFGGSL), 559-580 (ALETLDLRRNSLTALPQKAVSE), and 585-594 (GLRTIYLSQN). N-linked (GlcNAc...) asparagine glycans are attached at residues asparagine 408 and asparagine 427. Asparagine 500 is a glycosylation site (N-linked (GlcNAc...) asparagine). Residues 595 to 643 (PYDCCGVDGWGALQHGQTVADWAMVTCNLSSKIIRVTELPGGVPRDCKW) form the LRRCT domain. An N-linked (GlcNAc...) asparagine glycan is attached at asparagine 622. The chain crosses the membrane as a helical span at residues 651–671 (LYLVLILPSCLTLLVACTVIV). Residues 672–692 (LTFKKPLLQVIKSRCHWSSVY) are Cytoplasmic-facing.

The protein belongs to the LRRC32/LRRC33 family. In terms of assembly, interacts with TGFB1; associates via disulfide bonds with the Latency-associated peptide chain (LAP) regulatory chain of TGFB1, leading to regulate activation of TGF-beta-1. Interacts (via LRR repeats) with TLR2, TLR3, TLR4, TLR9 and probably other Toll-like receptors. Interacts with CYBB/NOX2; the interaction is direct. As to expression, mainly expressed in cells of hematopoietic origin. Highly expressed in bone marrow, thymus, liver, lung, intestine and spleen. In the brain, highly expressed in microglia.

It localises to the cell membrane. It is found in the endoplasmic reticulum membrane. Key regulator of transforming growth factor beta-1 (TGFB1) specifically required for microglia function in the nervous system. Required for activation of latent TGF-beta-1 in macrophages and microglia: associates specifically via disulfide bonds with the Latency-associated peptide (LAP), which is the regulatory chain of TGFB1, and regulates integrin-dependent activation of TGF-beta-1. TGF-beta-1 activation mediated by LRRC33/NRROS is highly localized: there is little spreading of TGF-beta-1 activated from one microglial cell to neighboring microglia, suggesting the existence of localized and selective activation of TGF-beta-1 by LRRC33/NRROS. Indirectly plays a role in Toll-like receptor (TLR) signaling: ability to inhibit TLR-mediated NF-kappa-B activation and cytokine production is probably a consequence of its role in TGF-beta-1 signaling. In Homo sapiens (Human), this protein is Transforming growth factor beta activator LRRC33.